The primary structure comprises 312 residues: Malate dehydrogenase (312 aa).

NAD(+)-binding positions include 7–13 (GAAGGIG) and D34. Substrate is bound by residues R81 and R87. NAD(+) contacts are provided by residues N94 and 117-119 (ITN). Substrate-binding residues include N119 and R153. H177 serves as the catalytic Proton acceptor. M227 contacts NAD(+).

It belongs to the LDH/MDH superfamily. MDH type 1 family. In terms of assembly, homodimer.

The enzyme catalyses (S)-malate + NAD(+) = oxaloacetate + NADH + H(+). Catalyzes the reversible oxidation of malate to oxaloacetate. This Escherichia coli O17:K52:H18 (strain UMN026 / ExPEC) protein is Malate dehydrogenase.